We begin with the raw amino-acid sequence, 567 residues long: Geranylgeranyl transferase type-2 subunit alpha (567 aa).

PFTA repeat units lie at residues 44–78 (LDESVLELTSQILGANPDFATLWNCRREVLQQLEV), 88–122 (LVKAELGFLESCLRVNPKSYGTWHHRCWLLSRLPE), 124–158 (NWARELELCARFLEVDERNFHCWDYRRFVAAQAAV), 159–193 (PPAEELAFTDSLITRNFSNYSSWHYRSCLLPQLHP), 207–241 (VLLKELELVQNAFFTDPNDQSAWFYHRWLLGRADP), and 363–397 (VLQSELESCKELQELEPENKWCLLTIILLMRALDP). Position 98 is a phosphoserine (serine 98). LRR repeat units follow at residues 442–463 (EVRVLHLGHKDLTVLCHLEQLL), 464–486 (LVTHLDLSHNRLRALPPALAALR), 487–508 (CLEVLQANDNAIESLDGVTNLP), 509–530 (RLQELILCNNRLQQPAVLQPLT), and 534–555 (RLTLLNLQGNPLCQAEGSSEHL).

Belongs to the protein prenyltransferase subunit alpha family. In terms of assembly, heterotrimer composed of RABGGTA, RABGGTB and CHM; within this trimer, RABGGTA and RABGGTB form the catalytic component B, while CHM (component A) mediates peptide substrate binding. The Rab GGTase dimer (RGGT) interacts with CHM (component A) prior to Rab protein binding; the association is stabilized by geranylgeranyl pyrophosphate (GGpp). The CHM:RGGT:Rab complex is destabilized by GGpp. Interacts with non-phosphorylated form of RAB8A; phosphorylation of RAB8A at 'Thr-72' disrupts this interaction.

It catalyses the reaction geranylgeranyl diphosphate + L-cysteinyl-[protein] = S-geranylgeranyl-L-cysteinyl-[protein] + diphosphate. With respect to regulation, the enzymatic reaction requires the aid of a Rab escort protein (also called component A), such as CHM. In terms of biological role, catalyzes the transfer of a geranylgeranyl moiety from geranylgeranyl diphosphate to both cysteines of Rab proteins with the C-terminal sequence -XXCC, -XCXC and -CCXX, such as RAB1A, RAB3A, RAB5A and RAB7A. The polypeptide is Geranylgeranyl transferase type-2 subunit alpha (RABGGTA) (Bos taurus (Bovine)).